A 211-amino-acid polypeptide reads, in one-letter code: MKLWDVVAVCLVLLHTASAFPLPAGKRLLEAPAEDHSLGHRRVPFALTSDSNMPEDYPDQFDDVMDFIQATIKRLKRSPDKQAAALPRRERNRQAAAASPENSRGKGRRGQRGKNRGCVLTAIHLNVTDLGLGYETKEELIFRYCSGSCESAETMYDKILKNLSRSRRLTSDKVGQACCRPVAFDDDLSFLDDNLVYHILRKHSAKRCGCI.

An N-terminal signal peptide occupies residues 1-19 (MKLWDVVAVCLVLLHTASA). Residues 20 to 75 (FPLPAGKRLLEAPAEDHSLGHRRVPFALTSDSNMPEDYPDQFDDVMDFIQATIKRL) constitute a propeptide that is removed on maturation. Positions 76-113 (KRSPDKQAAALPRRERNRQAAAASPENSRGKGRRGQRG) are disordered. 3 disulfides stabilise this stretch: C118/C179, C145/C208, and C149/C210. N-linked (GlcNAc...) asparagine glycosylation is found at N126 and N162.

Belongs to the TGF-beta family. GDNF subfamily. As to quaternary structure, homodimer; disulfide-linked. Interacts with GFRA1 coreceptor and RET: forms a 2:2:2 ternary complex composed of GDNF ligand, GFRA1 and RET receptor. Interacts (via propeptide) with SORL1 (via N-terminal ectodomain); this interaction affects GDNF-regulated, but not constitutive secretion. Also interacts with SORL1 in complex with GFRA1; this interaction leads to GDNF endocytosis and lysosomal degradation. Expressed in both the central nervous system (CNS) and in non-CNS tissues. Expressed in a highly dynamic pattern in the anterior neuroectoderm during the early stages of neurogenesis between 7.5 dpc and 10.5 dpc. Beginning at 10.5 dpc, expression begins in mesenchymal tissues of several organs including the digestive tract, kidney, testis, frontonasal mass, tooth primordium, tongue, mandible, whisker follicles, ear, eye, limb bud and in distinct regions of the brain. Also expressed in the heart, ileum, liver and muscle.

The protein resides in the secreted. In terms of biological role, neurotrophic factor that enhances survival and morphological differentiation of dopaminergic neurons and increases their high-affinity dopamine uptake. Acts by binding to its coreceptor, GFRA1, leading to autophosphorylation and activation of the RET receptor. Involved in the development of the neural crest. This chain is Glial cell line-derived neurotrophic factor (Gdnf), found in Mus musculus (Mouse).